A 226-amino-acid polypeptide reads, in one-letter code: LysM and putative peptidoglycan-binding domain-containing protein 1 (226 aa).

Phosphoserine occurs at positions 23 and 33. One can recognise a LysM domain in the interval 40–84 (LEHQLEPGDTLAGLALKYGVTMEQIKRTNRLYTNDSIFLKKTLYI). Positions 95–156 (NGLDSEEEND…PSHDLSASDF (62 aa)) are disordered. Residues 98–107 (DSEEENDGEE) show a composition bias toward acidic residues. S99 carries the post-translational modification Phosphoserine. Residues 142-151 (QETSTPSHDL) are compositionally biased toward polar residues. Residues S165, S180, S193, and S211 each carry the phosphoserine modification. Positions 170 to 226 (AAAQKLRKGESGVPEEDTGLYPSSPRMQQRAVLGPVPLTRTSRTQTLRDQEDEIFKL) are disordered. Basic and acidic residues predominate over residues 215-226 (TLRDQEDEIFKL).

This is LysM and putative peptidoglycan-binding domain-containing protein 1 (Lysmd1) from Mus musculus (Mouse).